A 641-amino-acid chain; its full sequence is Fructose-1,6-bisphosphatase class 3 (641 aa).

It belongs to the FBPase class 3 family. Mn(2+) is required as a cofactor.

The enzyme catalyses beta-D-fructose 1,6-bisphosphate + H2O = beta-D-fructose 6-phosphate + phosphate. It functions in the pathway carbohydrate biosynthesis; gluconeogenesis. The polypeptide is Fructose-1,6-bisphosphatase class 3 (Bacillus velezensis (strain DSM 23117 / BGSC 10A6 / LMG 26770 / FZB42) (Bacillus amyloliquefaciens subsp. plantarum)).